The sequence spans 515 residues: Histidine ammonia-lyase (515 aa).

The segment at residues 142-144 (ASG) is a cross-link (5-imidazolinone (Ala-Gly)). Ser-143 is subject to 2,3-didehydroalanine (Ser).

The protein belongs to the PAL/histidase family. Post-translationally, contains an active site 4-methylidene-imidazol-5-one (MIO), which is formed autocatalytically by cyclization and dehydration of residues Ala-Ser-Gly.

Its subcellular location is the cytoplasm. It carries out the reaction L-histidine = trans-urocanate + NH4(+). Its pathway is amino-acid degradation; L-histidine degradation into L-glutamate; N-formimidoyl-L-glutamate from L-histidine: step 1/3. The protein is Histidine ammonia-lyase of Methylobacterium nodulans (strain LMG 21967 / CNCM I-2342 / ORS 2060).